Here is a 99-residue protein sequence, read N- to C-terminus: EPIDERMAL PATTERNING FACTOR-like protein 8 (99 aa).

The first 35 residues, Met1–His35, serve as a signal peptide directing secretion. 3 disulfides stabilise this stretch: Cys53/Cys90, Cys57/Cys63, and Cys60/Cys92.

Belongs to the plant cysteine rich small secretory peptide family. Epidermal patterning factor subfamily.

Its subcellular location is the secreted. Functionally, controls stomatal patterning. This Arabidopsis thaliana (Mouse-ear cress) protein is EPIDERMAL PATTERNING FACTOR-like protein 8.